We begin with the raw amino-acid sequence, 333 residues long: Glutamyl-tRNA reductase (333 aa).

Residues 60-63 (TCHR), Ser110, 115-117 (ETE), and Gln121 contribute to the substrate site. Cys61 functions as the Nucleophile in the catalytic mechanism. An NADP(+)-binding site is contributed by 189 to 194 (GYSEIN).

Belongs to the glutamyl-tRNA reductase family. As to quaternary structure, homodimer.

The catalysed reaction is (S)-4-amino-5-oxopentanoate + tRNA(Glu) + NADP(+) = L-glutamyl-tRNA(Glu) + NADPH + H(+). The protein operates within porphyrin-containing compound metabolism; protoporphyrin-IX biosynthesis; 5-aminolevulinate from L-glutamyl-tRNA(Glu): step 1/2. Functionally, catalyzes the NADPH-dependent reduction of glutamyl-tRNA(Glu) to glutamate 1-semialdehyde (GSA). The protein is Glutamyl-tRNA reductase of Chlamydia muridarum (strain MoPn / Nigg).